Reading from the N-terminus, the 234-residue chain is Ribosomal RNA small subunit methyltransferase G (234 aa).

Residues glycine 96, leucine 101, 119–121 (DAT), 147–148 (VE), and arginine 161 each bind S-adenosyl-L-methionine.

Belongs to the methyltransferase superfamily. RNA methyltransferase RsmG family.

The protein resides in the cytoplasm. Specifically methylates the N7 position of a guanine in 16S rRNA. The polypeptide is Ribosomal RNA small subunit methyltransferase G (Chlorobium chlorochromatii (strain CaD3)).